The chain runs to 77 residues: uncharacterized protein (77 aa).

A run of 2 helical transmembrane segments spans residues 3-23 and 35-55; these read FNFI…SFLF and IGAI…VALL.

It localises to the cell membrane. This is an uncharacterized protein from Haemophilus influenzae (strain ATCC 51907 / DSM 11121 / KW20 / Rd).